A 417-amino-acid chain; its full sequence is UDP-N-acetylglucosamine 1-carboxyvinyltransferase (417 aa).

22 to 23 lines the phosphoenolpyruvate pocket; sequence KN. R92 serves as a coordination point for UDP-N-acetyl-alpha-D-glucosamine. C116 acts as the Proton donor in catalysis. 2-(S-cysteinyl)pyruvic acid O-phosphothioketal is present on C116. UDP-N-acetyl-alpha-D-glucosamine contacts are provided by residues 121–125, D306, and I328; that span reads RPIDL.

The protein belongs to the EPSP synthase family. MurA subfamily.

The protein localises to the cytoplasm. The enzyme catalyses phosphoenolpyruvate + UDP-N-acetyl-alpha-D-glucosamine = UDP-N-acetyl-3-O-(1-carboxyvinyl)-alpha-D-glucosamine + phosphate. The protein operates within cell wall biogenesis; peptidoglycan biosynthesis. Functionally, cell wall formation. Adds enolpyruvyl to UDP-N-acetylglucosamine. The sequence is that of UDP-N-acetylglucosamine 1-carboxyvinyltransferase from Buchnera aphidicola subsp. Schizaphis graminum (strain Sg).